Reading from the N-terminus, the 431-residue chain is 3-isopropylmalate dehydratase large subunit (431 aa).

Positions 300, 360, and 363 each coordinate [4Fe-4S] cluster.

This sequence belongs to the aconitase/IPM isomerase family. LeuC type 2 subfamily. In terms of assembly, heterodimer of LeuC and LeuD. It depends on [4Fe-4S] cluster as a cofactor.

It carries out the reaction (2R,3S)-3-isopropylmalate = (2S)-2-isopropylmalate. It participates in amino-acid biosynthesis; L-leucine biosynthesis; L-leucine from 3-methyl-2-oxobutanoate: step 2/4. In terms of biological role, catalyzes the isomerization between 2-isopropylmalate and 3-isopropylmalate, via the formation of 2-isopropylmaleate. In Sulfurihydrogenibium sp. (strain YO3AOP1), this protein is 3-isopropylmalate dehydratase large subunit.